The following is a 289-amino-acid chain: Early E4 34 kDa protein (289 aa).

This sequence belongs to the adenoviridae E4 30 to 34 kDa protein family. As to quaternary structure, interacts with E1B-55k.

It localises to the host nucleus. Its subcellular location is the host cytoplasm. Plays a major role to prevent cellular inhibition of viral genome replication by nuclear bodies. Assembles an SCF-like E3 ubiquitin ligase complex based on the cellular proteins ELOB, ELOC, CUL5 and RBX1, in cooperation with viral E1B-55K. This viral RING-type ligase ubiquitinates cellular substrates prior to proteasomal degradation: p53/TP53, LIG4, MRE11-RAD50-NBS1 (MRN) complex, ITGA3, DAXX and BLM. This is Early E4 34 kDa protein from Human adenovirus F serotype 40 (HAdV-40).